Here is a 382-residue protein sequence, read N- to C-terminus: Alkanesulfonate monooxygenase (382 aa).

This sequence belongs to the SsuD family. In terms of assembly, homotetramer.

The catalysed reaction is an alkanesulfonate + FMNH2 + O2 = an aldehyde + FMN + sulfite + H2O + 2 H(+). In terms of biological role, catalyzes the desulfonation of aliphatic sulfonates. This Yersinia pseudotuberculosis serotype IB (strain PB1/+) protein is Alkanesulfonate monooxygenase.